Reading from the N-terminus, the 438-residue chain is Trigger factor (438 aa).

In terms of domain architecture, PPIase FKBP-type spans aspartate 160 to proline 245.

This sequence belongs to the FKBP-type PPIase family. Tig subfamily.

Its subcellular location is the cytoplasm. The catalysed reaction is [protein]-peptidylproline (omega=180) = [protein]-peptidylproline (omega=0). Functionally, involved in protein export. Acts as a chaperone by maintaining the newly synthesized protein in an open conformation. Functions as a peptidyl-prolyl cis-trans isomerase. The protein is Trigger factor of Francisella tularensis subsp. holarctica (strain LVS).